Consider the following 450-residue polypeptide: Ribosomal protein uS12 methylthiotransferase RimO (450 aa).

One can recognise an MTTase N-terminal domain in the interval 10 to 125 (SRIALVSLGC…VVDIVRRAAT (116 aa)). Residues Cys-19, Cys-54, Cys-88, Cys-162, Cys-166, and Cys-169 each contribute to the [4Fe-4S] cluster site. The region spanning 148-378 (SGSPFTAYLK…AAVQREVSRA (231 aa)) is the Radical SAM core domain. The TRAM domain maps to 381–447 (RARVGSEVTV…PYDLRARVLS (67 aa)).

This sequence belongs to the methylthiotransferase family. RimO subfamily. The cofactor is [4Fe-4S] cluster.

The protein localises to the cytoplasm. The catalysed reaction is L-aspartate(89)-[ribosomal protein uS12]-hydrogen + (sulfur carrier)-SH + AH2 + 2 S-adenosyl-L-methionine = 3-methylsulfanyl-L-aspartate(89)-[ribosomal protein uS12]-hydrogen + (sulfur carrier)-H + 5'-deoxyadenosine + L-methionine + A + S-adenosyl-L-homocysteine + 2 H(+). Its function is as follows. Catalyzes the methylthiolation of an aspartic acid residue of ribosomal protein uS12. The sequence is that of Ribosomal protein uS12 methylthiotransferase RimO from Desulforudis audaxviator (strain MP104C).